We begin with the raw amino-acid sequence, 243 residues long: UPF0246 protein SUB1767 (243 aa).

Belongs to the UPF0246 family.

This is UPF0246 protein SUB1767 from Streptococcus uberis (strain ATCC BAA-854 / 0140J).